Here is a 94-residue protein sequence, read N- to C-terminus: MAGTAAHPEGITNPPIDELLEATDSKYSLVIYAAKRARQINAYYSQLGEGLLEYVGPLVETTNAQEKPLSIALREINAGLLTHETVADSLPPVS.

The protein belongs to the RNA polymerase subunit omega family. As to quaternary structure, the RNAP catalytic core consists of 2 alpha, 1 beta, 1 beta' and 1 omega subunit. When a sigma factor is associated with the core the holoenzyme is formed, which can initiate transcription.

It catalyses the reaction RNA(n) + a ribonucleoside 5'-triphosphate = RNA(n+1) + diphosphate. Its function is as follows. Promotes RNA polymerase assembly. Latches the N- and C-terminal regions of the beta' subunit thereby facilitating its interaction with the beta and alpha subunits. This is DNA-directed RNA polymerase subunit omega from Frankia casuarinae (strain DSM 45818 / CECT 9043 / HFP020203 / CcI3).